Here is a 429-residue protein sequence, read N- to C-terminus: Aspartate--tRNA(Asp/Asn) ligase (429 aa).

E167 contributes to the L-aspartate binding site. The interval 189-192 (QLYK) is aspartate. R210 contacts L-aspartate. Residues 210–212 (RAE) and E352 each bind ATP. The Mg(2+) site is built by E352 and S355. L-aspartate contacts are provided by S355 and R359. 400–403 (GLAR) lines the ATP pocket.

It belongs to the class-II aminoacyl-tRNA synthetase family. Type 2 subfamily. As to quaternary structure, homodimer. It depends on Mg(2+) as a cofactor.

It localises to the cytoplasm. The catalysed reaction is tRNA(Asx) + L-aspartate + ATP = L-aspartyl-tRNA(Asx) + AMP + diphosphate. Its function is as follows. Aspartyl-tRNA synthetase with relaxed tRNA specificity since it is able to aspartylate not only its cognate tRNA(Asp) but also tRNA(Asn). Reaction proceeds in two steps: L-aspartate is first activated by ATP to form Asp-AMP and then transferred to the acceptor end of tRNA(Asp/Asn). This chain is Aspartate--tRNA(Asp/Asn) ligase, found in Saccharolobus solfataricus (strain ATCC 35092 / DSM 1617 / JCM 11322 / P2) (Sulfolobus solfataricus).